The primary structure comprises 275 residues: Proteasome subunit beta (275 aa).

A propeptide spans 1–52 (MQDTTANQVAANATSSFTEHLQRNRPGLLPYNQPFPAALTGAGSQPLQVPHA) (removed in mature form; by autocatalysis). Threonine 53 serves as the catalytic Nucleophile.

Belongs to the peptidase T1B family. As to quaternary structure, the 20S proteasome core is composed of 14 alpha and 14 beta subunits that assemble into four stacked heptameric rings, resulting in a barrel-shaped structure. The two inner rings, each composed of seven catalytic beta subunits, are sandwiched by two outer rings, each composed of seven alpha subunits. The catalytic chamber with the active sites is on the inside of the barrel. Has a gated structure, the ends of the cylinder being occluded by the N-termini of the alpha-subunits. Is capped by the proteasome-associated ATPase, ARC.

Its subcellular location is the cytoplasm. The enzyme catalyses Cleavage of peptide bonds with very broad specificity.. It functions in the pathway protein degradation; proteasomal Pup-dependent pathway. The formation of the proteasomal ATPase ARC-20S proteasome complex, likely via the docking of the C-termini of ARC into the intersubunit pockets in the alpha-rings, may trigger opening of the gate for substrate entry. Interconversion between the open-gate and close-gate conformations leads to a dynamic regulation of the 20S proteasome proteolysis activity. Functionally, component of the proteasome core, a large protease complex with broad specificity involved in protein degradation. This is Proteasome subunit beta from Arthrobacter sp. (strain FB24).